Reading from the N-terminus, the 323-residue chain is tRNA dimethylallyltransferase (323 aa).

Position 15-22 (15-22 (GATGSGKT)) interacts with ATP. 17–22 (TGSGKT) contributes to the substrate binding site. Interaction with substrate tRNA regions lie at residues 40-43 (DSRQ) and 164-168 (QRLIR).

The protein belongs to the IPP transferase family. As to quaternary structure, monomer. Requires Mg(2+) as cofactor.

The enzyme catalyses adenosine(37) in tRNA + dimethylallyl diphosphate = N(6)-dimethylallyladenosine(37) in tRNA + diphosphate. Its function is as follows. Catalyzes the transfer of a dimethylallyl group onto the adenine at position 37 in tRNAs that read codons beginning with uridine, leading to the formation of N6-(dimethylallyl)adenosine (i(6)A). The chain is tRNA dimethylallyltransferase from Chloroherpeton thalassium (strain ATCC 35110 / GB-78).